Reading from the N-terminus, the 398-residue chain is Probable beta-1,3-galactosyltransferase 5 (398 aa).

A helical; Signal-anchor for type II membrane protein transmembrane segment spans residues 11–31 (LTMTWVPLLCISCFFLGAIFT). Residues Asn-110, Asn-115, and Asn-206 are each glycosylated (N-linked (GlcNAc...) asparagine).

This sequence belongs to the glycosyltransferase 31 family. It depends on Mn(2+) as a cofactor.

The protein resides in the golgi apparatus membrane. It functions in the pathway protein modification; protein glycosylation. Beta-1,3-galactosyltransferase that transfers galactose from UDP-galactose to substrates with a terminal glycosyl residue. The protein is Probable beta-1,3-galactosyltransferase 5 (B3GALT5) of Arabidopsis thaliana (Mouse-ear cress).